We begin with the raw amino-acid sequence, 439 residues long: Type 3 secretion system ATPase (439 aa).

172–177 is an ATP binding site; sequence GGGKST.

It belongs to the ATPase alpha/beta chains family. T3SS ATPase subfamily. The core secretion machinery of the T3SS is composed of approximately 20 different proteins, including cytoplasmic components, a base, an export apparatus and a needle. This subunit is part of the cytosolic complex. Forms homohexamers.

The protein resides in the cytoplasm. It carries out the reaction ATP + H2O + cellular proteinSide 1 = ADP + phosphate + cellular proteinSide 2.. Its function is as follows. ATPase component of the type III secretion system (T3SS), also called injectisome, which is used to inject bacterial effector proteins into eukaryotic host cells. Acts as a molecular motor to provide the energy that is required for the export of proteins. Required for type III secretion apparatus (T3SA) formation, proper protein secretion, host cell invasion and virulence. May play a critical role in T3SS substrate recognition, disassembly of the effector/chaperone complex and unfolding of the effector in an ATP-dependent manner prior to secretion. This chain is Type 3 secretion system ATPase, found in Yersinia pseudotuberculosis serotype I (strain IP32953).